Consider the following 517-residue polypeptide: MDIIGGQHLRQMWDDLADVYGHKTALICESSGGVVNRYSYLELNQEINRTTNLFYTLGIRKGDKVALHLDNCPEFIFCWFGLAKIGAIMVPINARLLREESAWILQNSQACLLVTSAQFYPMYQQIQQEDATQLRHICLTDVALPADDGVSSFTQLKNQQPATLCYAPPLSTDDTAEILFTSGTTSRPKGVVITHYNLRFAGYYSAWQCALRDDDVYLTVMPAFHIDCQCTAAMAAFSAGATFVLVEKYSARAFWGQVQKYRATVTECIPMMIRTLMAQPPSANDRQHRLREVMFYLNLSEQEKDAFCERFGVRLLTSYGMTETIVGIIGDRPGDKRRWPSIGRAGFCYEAEIRDDHNRPLPAGEIGEICIKGVPGKTIFKEYFLNPKATAKVLEADGWLHTGDTGYCDEEGFFYFVDRRCNMIKRGGENVSCVELENIIATHPKIQDIVVVGIKDSIRDEAIKAFVVLNEGETLSEEEFFRFCEQNMAKFKVPSYLEIRKDLPRNCSGKIIRKNLK.

It belongs to the ATP-dependent AMP-binding enzyme family.

It carries out the reaction 4-(trimethylamino)butanoate + ATP + CoA = 4-(trimethylamino)butanoyl-CoA + AMP + diphosphate. It catalyses the reaction crotonobetaine + ATP + CoA = crotonobetainyl-CoA + AMP + diphosphate. The enzyme catalyses (R)-carnitine + ATP + CoA = (R)-carnitinyl-CoA + AMP + diphosphate. The protein operates within amine and polyamine metabolism; carnitine metabolism. Functionally, catalyzes the transfer of CoA to carnitine, generating the initial carnitinyl-CoA needed for the CaiB reaction cycle. Also has activity toward crotonobetaine and gamma-butyrobetaine. In Shigella sonnei (strain Ss046), this protein is Crotonobetaine/carnitine--CoA ligase.